The primary structure comprises 254 residues: Phosphoribosylaminoimidazole-succinocarboxamide synthase (254 aa).

Belongs to the SAICAR synthetase family.

The catalysed reaction is 5-amino-1-(5-phospho-D-ribosyl)imidazole-4-carboxylate + L-aspartate + ATP = (2S)-2-[5-amino-1-(5-phospho-beta-D-ribosyl)imidazole-4-carboxamido]succinate + ADP + phosphate + 2 H(+). Its pathway is purine metabolism; IMP biosynthesis via de novo pathway; 5-amino-1-(5-phospho-D-ribosyl)imidazole-4-carboxamide from 5-amino-1-(5-phospho-D-ribosyl)imidazole-4-carboxylate: step 1/2. The protein is Phosphoribosylaminoimidazole-succinocarboxamide synthase of Sinorhizobium fredii (strain NBRC 101917 / NGR234).